We begin with the raw amino-acid sequence, 424 residues long: Tyrosine--tRNA ligase (424 aa).

Position 37 (Tyr37) interacts with L-tyrosine. The short motif at 42-51 (PTADSLHLGH) is the 'HIGH' region element. Tyr175 and Gln179 together coordinate L-tyrosine. A 'KMSKS' region motif is present at residues 235-239 (KFGKT). Lys238 contributes to the ATP binding site. The 58-residue stretch at 357 to 414 (ADLMQALVDAELQPSRGQARKTIASNAVTINGEKQSDPEYIFNDEDRLFGRYTLLRRG) folds into the S4 RNA-binding domain.

The protein belongs to the class-I aminoacyl-tRNA synthetase family. TyrS type 1 subfamily. As to quaternary structure, homodimer.

Its subcellular location is the cytoplasm. The enzyme catalyses tRNA(Tyr) + L-tyrosine + ATP = L-tyrosyl-tRNA(Tyr) + AMP + diphosphate + H(+). Catalyzes the attachment of tyrosine to tRNA(Tyr) in a two-step reaction: tyrosine is first activated by ATP to form Tyr-AMP and then transferred to the acceptor end of tRNA(Tyr). The polypeptide is Tyrosine--tRNA ligase (Salmonella agona (strain SL483)).